The following is a 332-amino-acid chain: L-lactate dehydrogenase A chain (332 aa).

Residues 29 to 57 and arginine 99 each bind NAD(+); that span reads GMVGMASAISVLLKDLCDELALVDVMEEK. Arginine 106, asparagine 138, and arginine 169 together coordinate substrate. NAD(+) is bound at residue asparagine 138. The Proton acceptor role is filled by histidine 193. A substrate-binding site is contributed by threonine 248.

It belongs to the LDH/MDH superfamily. LDH family. In terms of assembly, homotetramer.

It localises to the cytoplasm. It carries out the reaction (S)-lactate + NAD(+) = pyruvate + NADH + H(+). It participates in fermentation; pyruvate fermentation to lactate; (S)-lactate from pyruvate: step 1/1. Interconverts simultaneously and stereospecifically pyruvate and lactate with concomitant interconversion of NADH and NAD(+). In Lycodichthys dearborni (Antarctic eelpout), this protein is L-lactate dehydrogenase A chain (ldha).